The sequence spans 184 residues: UPF0149 protein PSPA7_5968 (184 aa).

This sequence belongs to the UPF0149 family.

The sequence is that of UPF0149 protein PSPA7_5968 from Pseudomonas paraeruginosa (strain DSM 24068 / PA7) (Pseudomonas aeruginosa (strain PA7)).